The sequence spans 309 residues: Tagatose-6-phosphate kinase 1 (309 aa).

The protein belongs to the carbohydrate kinase PfkB family. LacC subfamily.

The enzyme catalyses D-tagatofuranose 6-phosphate + ATP = D-tagatofuranose 1,6-bisphosphate + ADP + H(+). Its pathway is carbohydrate metabolism; D-tagatose 6-phosphate degradation; D-glyceraldehyde 3-phosphate and glycerone phosphate from D-tagatose 6-phosphate: step 1/2. The polypeptide is Tagatose-6-phosphate kinase 1 (Streptococcus agalactiae serotype III (strain NEM316)).